Here is a 249-residue protein sequence, read N- to C-terminus: Leucyl/phenylalanyl-tRNA--protein transferase (249 aa).

It belongs to the L/F-transferase family.

It localises to the cytoplasm. The catalysed reaction is N-terminal L-lysyl-[protein] + L-leucyl-tRNA(Leu) = N-terminal L-leucyl-L-lysyl-[protein] + tRNA(Leu) + H(+). The enzyme catalyses N-terminal L-arginyl-[protein] + L-leucyl-tRNA(Leu) = N-terminal L-leucyl-L-arginyl-[protein] + tRNA(Leu) + H(+). It carries out the reaction L-phenylalanyl-tRNA(Phe) + an N-terminal L-alpha-aminoacyl-[protein] = an N-terminal L-phenylalanyl-L-alpha-aminoacyl-[protein] + tRNA(Phe). Functions in the N-end rule pathway of protein degradation where it conjugates Leu, Phe and, less efficiently, Met from aminoacyl-tRNAs to the N-termini of proteins containing an N-terminal arginine or lysine. This is Leucyl/phenylalanyl-tRNA--protein transferase from Cupriavidus metallidurans (strain ATCC 43123 / DSM 2839 / NBRC 102507 / CH34) (Ralstonia metallidurans).